A 143-amino-acid polypeptide reads, in one-letter code: Mini-ribonuclease 3 (143 aa).

Residue Asp23 is part of the active site.

Belongs to the MrnC RNase family. As to quaternary structure, homodimer. Requires Mg(2+) as cofactor.

It localises to the cytoplasm. Involved in correct processing of both the 5' and 3' ends of 23S rRNA precursor. Processes 30S rRNA precursor transcript even in absence of ribonuclease 3 (Rnc); Rnc processes 30S rRNA into smaller rRNA precursors. Cleaves more efficiently on assembled 50S ribosomal subunits. Cleavage is strongly stimulated by ribosomal protein L3 (RplC); 20-30% DMSO can replace RplC, suggesting RplC may alter rRNA conformation. The chain is Mini-ribonuclease 3 (mrnC) from Bacillus subtilis (strain 168).